Reading from the N-terminus, the 601-residue chain is Urocanate hydratase (601 aa).

NAD(+) is bound by residues 63-64 (GG) and Gln141. Positions 172–201 (SDRPSALLKQGLSPEGTAPGSGRSSAQVPG) are insert. The tract at residues 179 to 200 (LKQGLSPEGTAPGSGRSSAQVP) is disordered. Residues 216-218 (GMG), Glu236, 282-283 (NA), 307-311 (QTSAH), 317-318 (YL), and Tyr368 each bind NAD(+). Cys456 is an active-site residue. NAD(+) is bound at residue Gly538.

This sequence belongs to the urocanase family. NAD(+) serves as cofactor.

It is found in the cytoplasm. It carries out the reaction 4-imidazolone-5-propanoate = trans-urocanate + H2O. Its pathway is amino-acid degradation; L-histidine degradation into L-glutamate; N-formimidoyl-L-glutamate from L-histidine: step 2/3. Its function is as follows. Catalyzes the conversion of urocanate to 4-imidazolone-5-propionate. This is Urocanate hydratase from Ralstonia nicotianae (strain ATCC BAA-1114 / GMI1000) (Ralstonia solanacearum).